The primary structure comprises 1054 residues: Proteoglycan 4 (1054 aa).

The signal sequence occupies residues 1–24 (MGWKILPVCLSLLLPVVLIQQVSS). SMB domains lie at 26–69 (DLSS…PELS) and 66–108 (PELS…EEVH). 14 disulfide bridges follow: Cys-30-Cys-34, Cys-30-Cys-46, Cys-34-Cys-64, Cys-44-Cys-46, Cys-44-Cys-57, Cys-50-Cys-56, Cys-57-Cys-64, Cys-70-Cys-74, Cys-70-Cys-86, Cys-74-Cys-104, Cys-84-Cys-86, Cys-84-Cys-97, Cys-90-Cys-96, and Cys-97-Cys-104. A glycan (N-linked (GlcNAc...) asparagine) is linked at Asn-109. Residues 110–125 (STSPSSKTAPTPAGAS) are compositionally biased toward low complexity. Residues 110–764 (STSPSSKTAP…PLIPGPPVLF (655 aa)) form a disordered region. A glycan (O-linked (GalNAc...) serine) is linked at Ser-135. Residues 162–175 (QESSSSSSSSSSTI) are compositionally biased toward low complexity. Positions 188–200 (ELQKNPNVKDNKK) are enriched in basic and acidic residues. The span at 229-238 (TPPPPDPPTT) shows a compositional bias: pro residues. 2 O-linked (GalNAc...) threonine glycosylation sites follow: Thr-237 and Thr-250. Over residues 286–295 (TTATNKQSSA) the composition is skewed to low complexity. O-linked (GalNAc...) threonine glycosylation is present at Thr-301. Residue Ser-302 is glycosylated (O-linked (GalNAc...) serine). The span at 302–318 (SVKETRSAEKTSDKDVE) shows a compositional bias: basic and acidic residues. Thr-306 is a glycosylation site (O-linked (GalNAc...) threonine). O-linked (GalNAc...) serine glycosylation occurs at Ser-313. The stretch at 317–324 (VEPTSTTP) is one 1; approximate repeat. A 37 X 8 AA repeats of K-X-P-X-P-T-T-X region spans residues 317–618 (VEPTSTTPKN…TPKKPEPTTT (302 aa)). Positions 319-328 (PTSTTPKNSA) are enriched in polar residues. A 2; approximate repeat occupies 325-332 (KNSAPTTT). A glycan (O-linked (GalNAc...) serine) is linked at Ser-327. Low complexity predominate over residues 329–339 (PTTTKKPVTTT). 11 O-linked (GalNAc...) threonine glycosylation sites follow: Thr-330, Thr-338, Thr-354, Thr-362, Thr-369, Thr-377, Thr-378, Thr-385, Thr-386, Thr-393, and Thr-394. Residues 333–340 (KKPVTTTK) form a 3; approximate repeat. One copy of the 4; approximate repeat lies at 349–356 (QEPEPTTA). Repeat 5 spans residues 357 to 364 (KEPPPTTK). The span at 364–399 (KKPEPTTRKEPEPTTPKEPEPTTPKEPEPTTPKEPE) shows a compositional bias: basic and acidic residues. The 6; approximate repeat unit spans residues 365 to 371 (KPEPTTR). A run of 5 repeats spans residues 372–379 (KEPEPTTP), 380–387 (KEPEPTTP), 388–395 (KEPEPTTP), 396–403 (KEPEPTTP), and 404–411 (KEPPPTTK). A compositionally biased stretch (pro residues) spans 400–426 (PTTPKEPPPTTKKPEPTTPKEPGPTTP). The 12; approximate repeat unit spans residues 412–418 (KPEPTTP). O-linked (GalNAc...) threonine glycosylation is found at Thr-416, Thr-417, Thr-424, Thr-432, Thr-433, Thr-440, Thr-441, and Thr-448. 3 tandem repeats follow at residues 419–426 (KEPGPTTP), 427–434 (KEPEPTTT), and 435–442 (KEPEPTTT). Over residues 427–550 (KEPEPTTTKE…PEPTTPKKPE (124 aa)) the composition is skewed to basic and acidic residues. The stretch at 443–450 (KEPESTTR) is one 16; approximate repeat. 21 consecutive repeat copies span residues 451–458 (KEPEPTTP), 459–466 (KEPEPTTP), 467–474 (KEPEPTTL), 475–482 (KEPEPTTP), 483–490 (KEPEPTTP), 491–498 (KEPEPTTP), 499–506 (KEPEPTTP), 507–514 (KEPEPTTP), 515–522 (KEPEPTTP), 523–530 (KEPEPTTP), 531–538 (KEPEPTTP), 539–546 (KEPEPTTP), 547–554 (KKPEPTTP), 555–562 (KEPVPTTP), 563–570 (KEPEPTTP), 571–578 (KEPEPTTP), 579–586 (KEPEPTTR), 587–594 (KEPEPTTP), 595–602 (KEPEPTTP), 603–610 (KEPEPTTP), and 611–618 (KKPEPTTT). 14 O-linked (GalNAc...) threonine glycosylation sites follow: Thr-472, Thr-480, Thr-481, Thr-488, Thr-489, Thr-496, Thr-497, Thr-504, Thr-505, Thr-512, Thr-520, Thr-521, Thr-528, and Thr-529. The segment covering 551–562 (PTTPKEPVPTTP) has biased composition (pro residues). O-linked (GalNAc...) threonine glycosylation is found at Thr-553, Thr-560, Thr-561, Thr-568, Thr-569, Thr-576, and Thr-577. Basic and acidic residues predominate over residues 563–614 (KEPEPTTPKEPEPTTPKEPEPTTRKEPEPTTPKEPEPTTPKEPEPTTPKKPE). O-linked (GalNAc...) threonine glycosylation is found at Thr-592, Thr-600, and Thr-601. The segment covering 615-624 (PTTTSPKTTT) has biased composition (low complexity). Residues Thr-622, Thr-624, Thr-628, Thr-629, and Thr-692 are each glycosylated (O-linked (GalNAc...) threonine). Over residues 672–699 (KPTKKPTKAPKKPTSTKKPKTPKTRKPK) the composition is skewed to basic residues. A compositionally biased stretch (low complexity) spans 700 to 712 (TTPSPLKTTSATP). Positions 713 to 735 (ELNTTPLEVMLPTTTIPKQTPNP) are enriched in polar residues. Cys-795 and Cys-1053 are joined by a disulfide. Hemopexin repeat units lie at residues 797 to 840 (GKPV…VWGI) and 841 to 888 (PSPI…FGGL). An N-linked (GlcNAc...) asparagine glycan is attached at Asn-808. Thr-810 is a glycosylation site (O-linked (GalNAc...) threonine). N-linked (GlcNAc...) asparagine glycosylation is present at Asn-938.

In terms of assembly, homodimer; disulfide-linked. N-glycosylated. In terms of processing, O-glycosylated; contains glycosaminoglycan chondroitin sulfate and keratan sulfate. O-glycosylated with sialylated oligosaccharides which are predominantly represented by the monosialylated core type I structure, NeuNAcalpha2-3Galbeta1-3GalNAc, with smaller amounts of disialylated O-glycans. Post-translationally, the disulfide bond between Cys-795 and Cys-1053 is essential for protein cleavage. Proteolytically cleaved by cathepsin CTSG. As to expression, highly expressed in cartilage, bone and liver and weakly expressed in heart, brain and muscle. Expressed in the surface chondrocytes and in synovial intimal cells. Isoform B is expressed in bone, small intestine, muscle, testis, heart, liver and lung. Isoform C and isoform D are widely expressed.

The protein localises to the secreted. In terms of biological role, plays a role in boundary lubrication within articulating joints. Prevents protein deposition onto cartilage from synovial fluid by controlling adhesion-dependent synovial growth and inhibiting the adhesion of synovial cells to the cartilage surface. This is Proteoglycan 4 (Prg4) from Mus musculus (Mouse).